A 398-amino-acid polypeptide reads, in one-letter code: Enolase (398 aa).

A (2R)-2-phosphoglycerate-binding site is contributed by glutamine 154. Glutamate 196 (proton donor) is an active-site residue. Mg(2+) contacts are provided by aspartate 232, glutamate 273, and aspartate 300. Positions 325, 354, 355, and 376 each coordinate (2R)-2-phosphoglycerate. Catalysis depends on lysine 325, which acts as the Proton acceptor.

It belongs to the enolase family. The cofactor is Mg(2+).

The protein resides in the cytoplasm. It is found in the secreted. The protein localises to the cell surface. It carries out the reaction (2R)-2-phosphoglycerate = phosphoenolpyruvate + H2O. Its pathway is carbohydrate degradation; glycolysis; pyruvate from D-glyceraldehyde 3-phosphate: step 4/5. Functionally, catalyzes the reversible conversion of 2-phosphoglycerate (2-PG) into phosphoenolpyruvate (PEP). It is essential for the degradation of carbohydrates via glycolysis. This chain is Enolase, found in Halobacterium salinarum (strain ATCC 700922 / JCM 11081 / NRC-1) (Halobacterium halobium).